The chain runs to 302 residues: Bifunctional protein FolD 2 (302 aa).

NADP(+) is bound by residues 170-172, S195, and I236; that span reads GRS.

This sequence belongs to the tetrahydrofolate dehydrogenase/cyclohydrolase family. As to quaternary structure, homodimer.

It carries out the reaction (6R)-5,10-methylene-5,6,7,8-tetrahydrofolate + NADP(+) = (6R)-5,10-methenyltetrahydrofolate + NADPH. It catalyses the reaction (6R)-5,10-methenyltetrahydrofolate + H2O = (6R)-10-formyltetrahydrofolate + H(+). It participates in one-carbon metabolism; tetrahydrofolate interconversion. Functionally, catalyzes the oxidation of 5,10-methylenetetrahydrofolate to 5,10-methenyltetrahydrofolate and then the hydrolysis of 5,10-methenyltetrahydrofolate to 10-formyltetrahydrofolate. The polypeptide is Bifunctional protein FolD 2 (Paracoccus denitrificans (strain Pd 1222)).